The primary structure comprises 304 residues: ATP phosphoribosyltransferase (304 aa).

The protein belongs to the ATP phosphoribosyltransferase family. Long subfamily. Requires Mg(2+) as cofactor.

It is found in the cytoplasm. The catalysed reaction is 1-(5-phospho-beta-D-ribosyl)-ATP + diphosphate = 5-phospho-alpha-D-ribose 1-diphosphate + ATP. It participates in amino-acid biosynthesis; L-histidine biosynthesis; L-histidine from 5-phospho-alpha-D-ribose 1-diphosphate: step 1/9. With respect to regulation, feedback inhibited by histidine. Catalyzes the condensation of ATP and 5-phosphoribose 1-diphosphate to form N'-(5'-phosphoribosyl)-ATP (PR-ATP). Has a crucial role in the pathway because the rate of histidine biosynthesis seems to be controlled primarily by regulation of HisG enzymatic activity. The polypeptide is ATP phosphoribosyltransferase (Xanthomonas oryzae pv. oryzae (strain MAFF 311018)).